The following is a 356-amino-acid chain: tRNA N6-adenosine threonylcarbamoyltransferase (356 aa).

The Fe cation site is built by His115 and His119. Residues 139–143, Asp173, Gly186, Asp190, and Asn291 each bind substrate; that span reads LVSGG. A Fe cation-binding site is contributed by Asp319.

It belongs to the KAE1 / TsaD family. Requires Fe(2+) as cofactor.

The protein resides in the cytoplasm. The enzyme catalyses L-threonylcarbamoyladenylate + adenosine(37) in tRNA = N(6)-L-threonylcarbamoyladenosine(37) in tRNA + AMP + H(+). Its function is as follows. Required for the formation of a threonylcarbamoyl group on adenosine at position 37 (t(6)A37) in tRNAs that read codons beginning with adenine. Is involved in the transfer of the threonylcarbamoyl moiety of threonylcarbamoyl-AMP (TC-AMP) to the N6 group of A37, together with TsaE and TsaB. TsaD likely plays a direct catalytic role in this reaction. The sequence is that of tRNA N6-adenosine threonylcarbamoyltransferase from Arthrobacter sp. (strain FB24).